The sequence spans 82 residues: Polyketide biosynthesis acyl-carrier-protein AcpK (82 aa).

Residues 4–79 (QRIFEVLITN…ELAEVLYDKV (76 aa)) enclose the Carrier domain. Ser39 bears the O-(pantetheine 4'-phosphoryl)serine mark.

In terms of processing, 4'-phosphopantetheine is transferred from CoA to a specific serine of apo-ACP by sfp.

Its subcellular location is the cytoplasm. Its pathway is antibiotic biosynthesis; bacillaene biosynthesis. In terms of biological role, involved in some intermediate steps for the synthesis of the antibiotic polyketide bacillaene which is involved in secondary metabolism. The protein is Polyketide biosynthesis acyl-carrier-protein AcpK (acpK) of Bacillus subtilis (strain 168).